The following is a 229-amino-acid chain: Uracil-DNA glycosylase (229 aa).

Aspartate 70 functions as the Proton acceptor in the catalytic mechanism.

The protein belongs to the uracil-DNA glycosylase (UDG) superfamily. UNG family.

It is found in the cytoplasm. The enzyme catalyses Hydrolyzes single-stranded DNA or mismatched double-stranded DNA and polynucleotides, releasing free uracil.. In terms of biological role, excises uracil residues from the DNA which can arise as a result of misincorporation of dUMP residues by DNA polymerase or due to deamination of cytosine. The protein is Uracil-DNA glycosylase of Chlamydia trachomatis serovar L2b (strain UCH-1/proctitis).